The sequence spans 304 residues: uncharacterized protein (304 aa).

Active-site charge relay system residues include T58 and Y121. Y147 (proton donor) is an active-site residue. The active-site Schiff-base intermediate with substrate is K175.

The protein belongs to the DapA family. As to quaternary structure, homotetramer.

The protein localises to the cytoplasm. This is an uncharacterized protein from Halobacterium salinarum (strain ATCC 29341 / DSM 671 / R1).